The chain runs to 335 residues: Biotin synthase (335 aa).

The Radical SAM core domain occupies 51-281; the sequence is YRVQLASLLS…RSRVRLSAGR (231 aa). The [4Fe-4S] cluster site is built by C66, C70, and C73. 4 residues coordinate [2Fe-2S] cluster: C112, C144, C204, and R276.

It belongs to the radical SAM superfamily. Biotin synthase family. In terms of assembly, homodimer. [4Fe-4S] cluster serves as cofactor. The cofactor is [2Fe-2S] cluster.

The catalysed reaction is (4R,5S)-dethiobiotin + (sulfur carrier)-SH + 2 reduced [2Fe-2S]-[ferredoxin] + 2 S-adenosyl-L-methionine = (sulfur carrier)-H + biotin + 2 5'-deoxyadenosine + 2 L-methionine + 2 oxidized [2Fe-2S]-[ferredoxin]. Its pathway is cofactor biosynthesis; biotin biosynthesis; biotin from 7,8-diaminononanoate: step 2/2. In terms of biological role, catalyzes the conversion of dethiobiotin (DTB) to biotin by the insertion of a sulfur atom into dethiobiotin via a radical-based mechanism. The protein is Biotin synthase of Prochlorococcus marinus (strain MIT 9303).